Consider the following 630-residue polypeptide: MAAGVAAWLPFARAAAIGWMPVASGPMPAPPRQERKRTQDALIVLNVSGTRFQTWQDTLERYPDTLLGSSERDFFYHPETQQYFFDRDPDIFRHILNFYRTGKLHYPRHECISAYDEELAFFGLIPEIIGDCCYEEYKDRRRENAERLQDDADTDNTGESALPTMTARQRVWRAFENPHTSTMALVFYYVTGFFIAVSVIANVVETVPCGSSPGHIKELPCGERYAVAFFCLDTACVMIFTVEYLLRLAAAPSRYRFVRSVMSIIDVVAILPYYIGLVMTDNEDVSGAFVTLRVFRVFRIFKFSRHSQGLRILGYTLKSCASELGFLLFSLTMAIIIFATVMFYAEKGSSASKFTSIPAAFWYTIVTMTTLGYGDMVPKTIAGKIFGSICSLSGVLVIALPVPVIVSNFSRIYHQNQRADKRRAQKKARLARIRAAKTGSANAYMQSKRNGLLSNQLQSSEDEQAFVSKSGSSFETQHHHLLHCLEKTTNHEFVDEQVFEESCMEVATGNRPSSHSPSLSSQQGVTSTCCSRRHKKTFRIPNANVSGSHRGSVQELSTIQIRCVERTPLSNSRSSLNAKMEECVKLNCEQPYVTTAIISIPTPPVTTPEGDDRPESPEYSGGNIVRVSAL.

The Cytoplasmic segment spans residues methionine 1–alanine 184. An interaction with KCNIP1, KCNIP2, and other family members region spans residues alanine 2–methionine 20. Threonine 38 is subject to Phosphothreonine. An interaction with KCNIP1 region spans residues glutamate 71–aspartate 90. Zn(2+) is bound by residues histidine 105, cysteine 111, cysteine 132, and cysteine 133. The chain crosses the membrane as a helical span at residues leucine 185–threonine 206. The Extracellular segment spans residues valine 207–alanine 226. The helical transmembrane segment at valine 227 to alanine 249 threads the bilayer. Residues alanine 250 to arginine 256 lie on the Cytoplasmic side of the membrane. Residues phenylalanine 257–aspartate 281 form a helical membrane-spanning segment. At asparagine 282–glycine 287 the chain is on the extracellular side. The chain crosses the membrane as a helical; Voltage-sensor span at residues alanine 288 to serine 307. Residues glutamine 308–alanine 321 are Cytoplasmic-facing. Positions glutamine 308–alanine 321 are S4-S5 linker. Residues serine 322 to alanine 345 form a helical membrane-spanning segment. The Extracellular segment spans residues glutamate 346 to isoleucine 357. Residues proline 358 to threonine 369 constitute an intramembrane region (helical). Residues threonine 370, leucine 371, glycine 372, and tyrosine 373 each contribute to the K(+) site. Positions threonine 370–aspartate 375 match the Selectivity filter motif. An intramembrane segment occupies threonine 370 to valine 377. The Extracellular segment spans residues proline 378–threonine 380. Residues isoleucine 381–proline 403 form a helical membrane-spanning segment. Residues valine 404 to leucine 630 lie on the Cytoplasmic side of the membrane. The tract at residues phenylalanine 474–threonine 489 is required for dendritic targeting. Residues phenylalanine 474–leucine 630 are important for normal channel activation and inactivation, for interaction with KCNIP2, and probably other family members as well. Phosphoserine occurs at positions 548, 552, 572, and 575. A disordered region spans residues isoleucine 600–glycine 622. A phosphothreonine mark is found at threonine 602 and threonine 607. Position 616 is a phosphoserine (serine 616). Residues valine 627 to leucine 630 carry the PDZ-binding motif.

The protein belongs to the potassium channel family. D (Shal) (TC 1.A.1.2) subfamily. Kv4.2/KCND2 sub-subfamily. Homotetramer or heterotetramer with KCND1 or KCND3. Associates with the regulatory subunits KCNIP2, KCNIP3 and KCNIP4. Interacts with the regulatory subunit KCNIP1; this interaction mediates the capture of both the N- and C-terminus of KCND2, preventing N-type inactivation and stabilizing the S6 conformation, thereby accelerating closed state inactivation and recovery. In vivo, probably exists as heteromeric complex containing variable proportions of KCND1, KCND2, KCND3, KCNIP1, KCNIP2, KCNIP3, KCNIP4, DPP6 and DPP10. The tetrameric channel can associate with up to four regulatory subunits, such as KCNIP2 or KCNIP4. Interaction with four KCNIP4 chains does not reduce interaction with DPP10. Interacts with DLG4 and NCS1/FREQ. Interacts with DLG1. Probably part of a complex consisting of KCNIP1, KCNIP2 isoform 3 and KCND2. Interacts with FLNA, FLNC and DPP10. Identified in a complex with cAMP-dependent protein kinase (PKA), CAV3, AKAP6 and KCND3 in cardiac myocytes. Interacts (via S1 and S2 helices) with DPP6; this interaction stabilizes the conformation of the S1-S2 helices and facilitates S4 conformational change, including S4 sliding up and down, thereby accelerating activation, inactivation, and recovery. Phosphorylation in response to MAPK activation is increased in stimulated dendrites. Interaction with KCNIP2 and DPP6 propomtes phosphorylation by PKA at Ser-552. Phosphorylation at Ser-552 has no effect on interaction with KCNIP3, but is required for the regulation of channel activity by KCNIP3. Phosphorylation at Ser-552 leads to KCND2 internalization. Phosphorylated by MAPK in response to signaling via the metabotropic glutamate receptor GRM5. Phosphorylation at Ser-616 is required for the down-regulation of neuronal A-type currents in response to signaling via GRM5.

It is found in the cell membrane. The protein localises to the cell projection. Its subcellular location is the dendrite. The protein resides in the synapse. It localises to the perikaryon. It is found in the postsynaptic cell membrane. The protein localises to the dendritic spine. Its subcellular location is the sarcolemma. The protein resides in the cell junction. It localises to the membrane. It is found in the caveola. It carries out the reaction K(+)(in) = K(+)(out). Voltage-gated potassium channel that mediates transmembrane potassium transport in excitable membranes, primarily in the brain, but also in rodent heart. Mediates the major part of the dendritic A-type current I(SA) in brain neurons. This current is activated at membrane potentials that are below the threshold for action potentials. It regulates neuronal excitability, prolongs the latency before the first spike in a series of action potentials, regulates the frequency of repetitive action potential firing, shortens the duration of action potentials and regulates the back-propagation of action potentials from the neuronal cell body to the dendrites. Contributes to the regulation of the circadian rhythm of action potential firing in suprachiasmatic nucleus neurons, which regulates the circadian rhythm of locomotor activity. Functions downstream of the metabotropic glutamate receptor GRM5 and plays a role in neuronal excitability and in nociception mediated by activation of GRM5. Mediates the transient outward current I(to) in rodent heart left ventricle apex cells, but not in human heart, where this current is mediated by another family member. Forms tetrameric potassium-selective channels through which potassium ions pass in accordance with their electrochemical gradient. The channel alternates between opened and closed conformations in response to the voltage difference across the membrane. Can form functional homotetrameric channels and heterotetrameric channels that contain variable proportions of KCND2 and KCND3; channel properties depend on the type of pore-forming alpha subunits that are part of the channel. In vivo, membranes probably contain a mixture of heteromeric potassium channel complexes. Interaction with specific isoforms of the regulatory subunits KCNIP1, KCNIP2, KCNIP3 or KCNIP4 strongly increases expression at the cell surface and thereby increases channel activity; it modulates the kinetics of channel activation and inactivation, shifts the threshold for channel activation to more negative voltage values, shifts the threshold for inactivation to less negative voltages and accelerates recovery after inactivation. Likewise, interaction with DPP6 or DPP10 promotes expression at the cell membrane and regulates both channel characteristics and activity. Upon depolarization, the channel goes from a resting closed state (C state) to an activated but non-conducting state (C* state), from there, the channel may either inactivate (I state) or open (O state). This is A-type voltage-gated potassium channel KCND2 from Mustela putorius furo (European domestic ferret).